The chain runs to 186 residues: Der GTPase-activating protein YihI (186 aa).

The segment at 42-77 (KAREDKKKRKHKGLASGSRHSAVEEKANKLQNEIKD) is disordered. A compositionally biased stretch (basic and acidic residues) spans 62 to 77 (SAVEEKANKLQNEIKD).

It belongs to the YihI family. Interacts with Der.

A GTPase-activating protein (GAP) that modifies Der/EngA GTPase function. May play a role in ribosome biogenesis. This is Der GTPase-activating protein YihI from Haemophilus influenzae (strain ATCC 51907 / DSM 11121 / KW20 / Rd).